The following is a 533-amino-acid chain: Glucomannan 4-beta-mannosyltransferase 9 (533 aa).

Residues 37-57 (IVPALRLGVYICLTMSVMLFV) traverse the membrane as a helical segment. The active site involves D136. Positions 195 and 197 each coordinate substrate. D289 is an active-site residue. A run of 4 helical transmembrane segments spans residues 368–388 (LVAH…TVLV), 404–426 (VITL…WILF), 483–503 (VLEL…AFFG), and 510–530 (YLFA…GTIV).

Belongs to the glycosyltransferase 2 family. Plant cellulose synthase-like A subfamily. Expressed in cotyledons at the base of the hypocotyls, in root elongation zone, lateral root primordia, vascular system of young leaves, abscission zone of the pedicle,.

Its subcellular location is the golgi apparatus membrane. It carries out the reaction GDP-mannose + (glucomannan)n = GDP + (glucomannan)n+1.. In terms of biological role, possesses glucomannan synthase and mannan synthase activities in vitro. Mannan synthase consists of a 4-beta-mannosyltransferase activity on mannan using GDP-mannose. The beta-1,4-mannan product is the backbone for galactomannan synthesis by galactomannan galactosyltransferase. Galactomannan is a noncellulosic polysaccharides of plant cell wall. Required for lateral root development. The chain is Glucomannan 4-beta-mannosyltransferase 9 from Arabidopsis thaliana (Mouse-ear cress).